The following is a 290-amino-acid chain: Bifunctional protein FolD (290 aa).

NADP(+)-binding positions include 165 to 167 (GRS), S190, and I231.

The protein belongs to the tetrahydrofolate dehydrogenase/cyclohydrolase family. As to quaternary structure, homodimer.

The catalysed reaction is (6R)-5,10-methylene-5,6,7,8-tetrahydrofolate + NADP(+) = (6R)-5,10-methenyltetrahydrofolate + NADPH. It catalyses the reaction (6R)-5,10-methenyltetrahydrofolate + H2O = (6R)-10-formyltetrahydrofolate + H(+). It participates in one-carbon metabolism; tetrahydrofolate interconversion. In terms of biological role, catalyzes the oxidation of 5,10-methylenetetrahydrofolate to 5,10-methenyltetrahydrofolate and then the hydrolysis of 5,10-methenyltetrahydrofolate to 10-formyltetrahydrofolate. This chain is Bifunctional protein FolD, found in Aromatoleum aromaticum (strain DSM 19018 / LMG 30748 / EbN1) (Azoarcus sp. (strain EbN1)).